We begin with the raw amino-acid sequence, 651 residues long: Bromodomain-containing protein 7 (651 aa).

A Glycyl lysine isopeptide (Lys-Gly) (interchain with G-Cter in SUMO2) cross-link involves residue Lys21. Over residues Thr35–Asp45 the composition is skewed to polar residues. Residues Thr35 to Glu132 form a disordered region. Over residues Ser47–Lys57 the composition is skewed to basic and acidic residues. Lys52 is covalently cross-linked (Glycyl lysine isopeptide (Lys-Gly) (interchain with G-Cter in SUMO2)). Residues His58 to Gly69 are compositionally biased toward basic residues. The Nuclear localization signal signature appears at Lys65–Arg96. Over residues Glu70–Gln106 the composition is skewed to basic and acidic residues. Residues Lys127, Lys186, Lys197, Lys201, Lys212, and Lys241 each participate in a glycyl lysine isopeptide (Lys-Gly) (interchain with G-Cter in SUMO2) cross-link. The Bromo domain occupies Val131–Glu235. The disordered stretch occupies residues Thr253–Glu312. Basic and acidic residues predominate over residues Gln273–Glu312. 2 positions are modified to phosphoserine: Ser279 and Ser289. Residues Lys305 and Lys307 each participate in a glycyl lysine isopeptide (Lys-Gly) (interchain with G-Cter in SUMO2) cross-link. N6-acetyllysine is present on Lys328. A Glycyl lysine isopeptide (Lys-Gly) (interchain with G-Cter in SUMO2) cross-link involves residue Lys344. Residue Ser380 is modified to Phosphoserine. Lys389 is covalently cross-linked (Glycyl lysine isopeptide (Lys-Gly) (interchain with G-Cter in SUMO2)). Ser482 carries the phosphoserine modification. A Phosphothreonine modification is found at Thr514. The stretch at Ser536–Arg567 forms a coiled coil. The residue at position 621 (Ser621) is a Phosphoserine.

In terms of assembly, interacts with TRIM24, PTPN13 and DVL1. Identified in a complex with SMARCA4/BRG1, SMARCC1/BAF155, SMARCE1/BAF57, DPF2/BAF45D and ARID2, subunits of the SWI/SNF-B (PBAF) chromatin remodeling complex. Interacts with IRF2 and HNRPUL1. Interacts (via N-terminus) with TP53. Interacts (via C-terminus) with EP300. Interacts with BRCA1. Interacts (via bromo domain) with histone H3 (via N-terminus) acetylated at 'Lys-14' (H3K14ac). Has low affinity for histone H3 acetylated at 'Lys-9' (H3K9ac). Has the highest affinity for histone H3 that is acetylated both at 'Lys-9' (H3K9ac) and at 'Lys-14' (H3K14ac). Has very low affinity for non-acetylated histone H3. Interacts (via bromo domain) with histone H4 (via N-terminus) acetylated at 'Lys-8' (H3K8ac) (in vitro).

It localises to the nucleus. It is found in the chromosome. Its function is as follows. Acts both as coactivator and as corepressor. May play a role in chromatin remodeling. Activator of the Wnt signaling pathway in a DVL1-dependent manner by negatively regulating the GSK3B phosphotransferase activity. Induces dephosphorylation of GSK3B at 'Tyr-216'. Down-regulates TRIM24-mediated activation of transcriptional activation by AR. Transcriptional corepressor that down-regulates the expression of target genes. Binds to target promoters, leading to increased histone H3 acetylation at 'Lys-9' (H3K9ac). Binds to the ESR1 promoter. Recruits BRCA1 and POU2F1 to the ESR1 promoter. Coactivator for TP53-mediated activation of transcription of a set of target genes. Required for TP53-mediated cell-cycle arrest in response to oncogene activation. Promotes acetylation of TP53 at 'Lys-382', and thereby promotes efficient recruitment of TP53 to target promoters. Inhibits cell cycle progression from G1 to S phase. This chain is Bromodomain-containing protein 7 (BRD7), found in Pongo abelii (Sumatran orangutan).